The primary structure comprises 397 residues: 8-amino-7-oxononanoate synthase (397 aa).

Arginine 23 contributes to the substrate binding site. 110–111 (GY) contributes to the pyridoxal 5'-phosphate binding site. Histidine 135 provides a ligand contact to substrate. Pyridoxal 5'-phosphate-binding residues include serine 181, histidine 209, and threonine 237. Lysine 240 carries the post-translational modification N6-(pyridoxal phosphate)lysine. Threonine 354 is a binding site for substrate.

This sequence belongs to the class-II pyridoxal-phosphate-dependent aminotransferase family. BioF subfamily. As to quaternary structure, homodimer. Pyridoxal 5'-phosphate is required as a cofactor.

The enzyme catalyses 6-carboxyhexanoyl-[ACP] + L-alanine + H(+) = (8S)-8-amino-7-oxononanoate + holo-[ACP] + CO2. Its pathway is cofactor biosynthesis; biotin biosynthesis. Its function is as follows. Catalyzes the decarboxylative condensation of pimeloyl-[acyl-carrier protein] and L-alanine to produce 8-amino-7-oxononanoate (AON), [acyl-carrier protein], and carbon dioxide. The sequence is that of 8-amino-7-oxononanoate synthase from Anaeromyxobacter dehalogenans (strain 2CP-C).